The chain runs to 309 residues: Jacalin-related lectin 25 (309 aa).

The region spanning 8–190 (MFKVGPIGSQ…LTSIGIYVCP (183 aa)) is the Jacalin-type lectin domain.

This sequence belongs to the jacalin lectin family.

The sequence is that of Jacalin-related lectin 25 (JAL25) from Arabidopsis thaliana (Mouse-ear cress).